The chain runs to 134 residues: uncharacterized protein (134 aa).

The region spanning 4–107 (IFTKIINREL…PTHSLSNFSF (104 aa)) is the HIT domain. Residues 91–95 (HLHIH) carry the Histidine triad motif motif.

This is an uncharacterized protein from Mycobacterium leprae (strain TN).